We begin with the raw amino-acid sequence, 360 residues long: COP9 signalosome complex subunit 5 (360 aa).

Residues 60–197 enclose the MPN domain; the sequence is AKISALALLK…IGAFRTYPKD (138 aa). 3 residues coordinate Zn(2+): H143, H145, and D156. A JAMM motif motif is present at residues 143 to 156; it reads HSHPGYGCWLSGID. Disordered stretches follow at residues 293 to 315 and 341 to 360; these read LMPS…RDSS and SNKA…MVEA. A compositionally biased stretch (polar residues) spans 341-350; sequence SNKASTSAPD.

It belongs to the peptidase M67A family. CSN5 subfamily. In terms of assembly, component of the CSN complex, probably composed of CSN1, CSN2, CSN3, CSN4, CSN5, CSN6, CSN7 and CSN8. Interacts with MCM2.

Its function is as follows. Probable protease subunit of the COP9 signalosome complex (CSN), a complex involved in various cellular and developmental processes such as photomorphogenesis and response to hormones. The CSN complex is an essential regulator of the ubiquitin (Ubl) conjugation pathway by mediating the deneddylation of the cullin subunits of SCF-type E3 ligase complexes, leading to decrease the Ubl ligase activity of SCF. Involved in early response to iron deficiency. The sequence is that of COP9 signalosome complex subunit 5 from Oryza sativa subsp. japonica (Rice).